Reading from the N-terminus, the 91-residue chain is Small ribosomal subunit protein uS19 (91 aa).

Belongs to the universal ribosomal protein uS19 family.

In terms of biological role, protein S19 forms a complex with S13 that binds strongly to the 16S ribosomal RNA. In Acinetobacter baumannii (strain AB307-0294), this protein is Small ribosomal subunit protein uS19.